Reading from the N-terminus, the 362-residue chain is Peptide chain release factor 1 (362 aa).

N5-methylglutamine is present on Gln-237.

This sequence belongs to the prokaryotic/mitochondrial release factor family. Methylated by PrmC. Methylation increases the termination efficiency of RF1.

The protein resides in the cytoplasm. In terms of biological role, peptide chain release factor 1 directs the termination of translation in response to the peptide chain termination codons UAG and UAA. This Legionella pneumophila (strain Corby) protein is Peptide chain release factor 1.